We begin with the raw amino-acid sequence, 116 residues long: Large ribosomal subunit protein bL20 (116 aa).

The protein belongs to the bacterial ribosomal protein bL20 family.

Binds directly to 23S ribosomal RNA and is necessary for the in vitro assembly process of the 50S ribosomal subunit. It is not involved in the protein synthesizing functions of that subunit. The chain is Large ribosomal subunit protein bL20 from Bacteroides fragilis (strain ATCC 25285 / DSM 2151 / CCUG 4856 / JCM 11019 / LMG 10263 / NCTC 9343 / Onslow / VPI 2553 / EN-2).